A 204-amino-acid chain; its full sequence is Inner membrane-spanning protein YciB (204 aa).

A run of 6 helical transmembrane segments spans residues 3-23 (AEIS…VFFF), 45-65 (IFIA…VSWI), 70-90 (LPIM…LTLW), 107-127 (LFGV…GYVF), 145-165 (WGVF…MFTT), and 168-188 (WVAF…MAQM).

It belongs to the YciB family.

It is found in the cell inner membrane. Plays a role in cell envelope biogenesis, maintenance of cell envelope integrity and membrane homeostasis. In Agrobacterium fabrum (strain C58 / ATCC 33970) (Agrobacterium tumefaciens (strain C58)), this protein is Inner membrane-spanning protein YciB.